The primary structure comprises 506 residues: Exopolyphosphatase (506 aa).

Belongs to the GppA/Ppx family. As to quaternary structure, homodimer. The cofactor is Mg(2+).

It localises to the cell membrane. It catalyses the reaction [phosphate](n) + H2O = [phosphate](n-1) + phosphate + H(+). The enzyme catalyses [phosphate](n) + ATP = [phosphate](n+1) + ADP. Its activity is regulated as follows. Exopolyphosphatase activity is stimulated by NH(4)(+) and K(+). Phosphotransferase activity is insensitive to the addition of K(+) or NH(4)(+) ions. Functionally, degradation of inorganic polyphosphates (polyP). Releases orthophosphate processively from the ends of the polyP chain. Also has polyphosphate:ADP phosphotransferase activity, catalyzing the production of ATP from ADP and polyP. This Pseudomonas aeruginosa (strain ATCC 15692 / DSM 22644 / CIP 104116 / JCM 14847 / LMG 12228 / 1C / PRS 101 / PAO1) protein is Exopolyphosphatase.